Consider the following 205-residue polypeptide: Glycerol-3-phosphate acyltransferase (205 aa).

5 helical membrane passes run I4–V24, P80–F100, G107–A127, W130–I150, and V155–L175.

Belongs to the PlsY family. In terms of assembly, probably interacts with PlsX.

The protein resides in the cell inner membrane. It carries out the reaction an acyl phosphate + sn-glycerol 3-phosphate = a 1-acyl-sn-glycero-3-phosphate + phosphate. The protein operates within lipid metabolism; phospholipid metabolism. Catalyzes the transfer of an acyl group from acyl-phosphate (acyl-PO(4)) to glycerol-3-phosphate (G3P) to form lysophosphatidic acid (LPA). This enzyme utilizes acyl-phosphate as fatty acyl donor, but not acyl-CoA or acyl-ACP. This Klebsiella pneumoniae subsp. pneumoniae (strain ATCC 700721 / MGH 78578) protein is Glycerol-3-phosphate acyltransferase.